The chain runs to 263 residues: Phosphatidylglycerol--prolipoprotein diacylglyceryl transferase (263 aa).

The next 3 helical transmembrane spans lie at 17–37 (LSVR…IFLG), 56–76 (LLFY…VLFY), and 88–108 (IFAV…VLVA). Arginine 139 provides a ligand contact to a 1,2-diacyl-sn-glycero-3-phospho-(1'-sn-glycerol). 2 consecutive transmembrane segments (helical) span residues 176–196 (QLYH…WFTA) and 236–256 (ISMG…MVVF).

Belongs to the Lgt family.

It is found in the cell inner membrane. The enzyme catalyses L-cysteinyl-[prolipoprotein] + a 1,2-diacyl-sn-glycero-3-phospho-(1'-sn-glycerol) = an S-1,2-diacyl-sn-glyceryl-L-cysteinyl-[prolipoprotein] + sn-glycerol 1-phosphate + H(+). The protein operates within protein modification; lipoprotein biosynthesis (diacylglyceryl transfer). Functionally, catalyzes the transfer of the diacylglyceryl group from phosphatidylglycerol to the sulfhydryl group of the N-terminal cysteine of a prolipoprotein, the first step in the formation of mature lipoproteins. The sequence is that of Phosphatidylglycerol--prolipoprotein diacylglyceryl transferase from Dechloromonas aromatica (strain RCB).